We begin with the raw amino-acid sequence, 170 residues long: Transcriptional repressor NrdR (170 aa).

A zinc finger lies at 3 to 34 (CPFCGTQDTKVVDSRLVSEGAQVRRRRTCIHC). In terms of domain architecture, ATP-cone spans 49-139 (PKLIKSDGSR…VYRSFKDISE (91 aa)). Residues 151–170 (SVSIPKSKKTAPESKKEDQA) are disordered. Over residues 160–170 (TAPESKKEDQA) the composition is skewed to basic and acidic residues.

It belongs to the NrdR family. Zn(2+) is required as a cofactor.

Functionally, negatively regulates transcription of bacterial ribonucleotide reductase nrd genes and operons by binding to NrdR-boxes. The sequence is that of Transcriptional repressor NrdR from Marinomonas sp. (strain MWYL1).